A 226-amino-acid polypeptide reads, in one-letter code: Urease accessory protein UreF (226 aa).

It belongs to the UreF family. UreD, UreF and UreG form a complex that acts as a GTP-hydrolysis-dependent molecular chaperone, activating the urease apoprotein by helping to assemble the nickel containing metallocenter of UreC. The UreE protein probably delivers the nickel.

Its subcellular location is the cytoplasm. In terms of biological role, required for maturation of urease via the functional incorporation of the urease nickel metallocenter. The sequence is that of Urease accessory protein UreF from Nitrosospira multiformis (strain ATCC 25196 / NCIMB 11849 / C 71).